The chain runs to 436 residues: Na(+)/H(+) antiporter NhaA 2 (436 aa).

11 helical membrane-spanning segments follow: residues 35–55, 80–100, 116–136, 147–167, 176–196, 201–221, 226–246, 283–303, 313–333, 354–374, and 385–405; these read FGGGLLLLGAVLALLWANSPW, LATWAADGLLAIFFFVVGLEL, ALPVVAAIGGMIVPALIYVGI, GWAIPTATDIAFALAVLAVIG, AFLLTLAVVDDLLAITVIAIF, FKLTPLLVALLPIALFGLLVQ, WWWALIPLAVVAWTLVHESGV, VSAGFAVPVFAFFAAGVSLRG, PIVVGIVAGLVLGKVLGIFGS, LLGVSLLAGIGFTVSLLIGEL, and VKAAVLTGSVIAALLASAVLS.

This sequence belongs to the NhaA Na(+)/H(+) (TC 2.A.33) antiporter family.

The protein localises to the cell membrane. It carries out the reaction Na(+)(in) + 2 H(+)(out) = Na(+)(out) + 2 H(+)(in). In terms of biological role, na(+)/H(+) antiporter that extrudes sodium in exchange for external protons. This Salinispora arenicola (strain CNS-205) protein is Na(+)/H(+) antiporter NhaA 2.